We begin with the raw amino-acid sequence, 732 residues long: Integrator complex subunit 13 (732 aa).

Residues 564-648 show a composition bias toward basic and acidic residues; it reads PPEEEERKKR…DETPHMEKSK (85 aa). The tract at residues 564–650 is disordered; it reads PPEEEERKKR…TPHMEKSKGP (87 aa). The short motif at 572-582 is the Nuclear localization signal (NLS) element; it reads KRGRKREDRED. A Glycyl lysine isopeptide (Lys-Gly) (interchain with G-Cter in SUMO2) cross-link involves residue Lys-611. Phosphoserine is present on residues Ser-623, Ser-626, and Ser-678. The segment at 649–694 is cleavage module binding motif (CMBM); the sequence is GPVSLLSLWSNRINTANSRKHQEFAGRLNSVNNRAELYQHLKEENG.

This sequence belongs to the Integrator subunit 13 family. Component of the Integrator complex, composed of core subunits INTS1, INTS2, INTS3, INTS4, INTS5, INTS6, INTS7, INTS8, INTS9/RC74, INTS10, INTS11/CPSF3L, INTS12, INTS13, INTS14 and INTS15. The core complex associates with protein phosphatase 2A subunits PPP2CA and PPP2R1A, to form the Integrator-PP2A (INTAC) complex. INTS13 is part of the tail subcomplex, composed of INTS10, INTS13, INTS14 and INTS15. Interacts with transcription factors ZNF609 and ZNF655. Interacts with PAFAH1B1; this interaction may be required for proper recruitment of dynein complexes to the nuclear envelope at prophase.

The protein localises to the nucleus. It is found in the cytoplasm. In terms of biological role, component of the integrator complex, a multiprotein complex that terminates RNA polymerase II (Pol II) transcription in the promoter-proximal region of genes. The integrator complex provides a quality checkpoint during transcription elongation by driving premature transcription termination of transcripts that are unfavorably configured for transcriptional elongation: the complex terminates transcription by (1) catalyzing dephosphorylation of the C-terminal domain (CTD) of Pol II subunit POLR2A/RPB1 and SUPT5H/SPT5, (2) degrading the exiting nascent RNA transcript via endonuclease activity and (3) promoting the release of Pol II from bound DNA. The integrator complex is also involved in terminating the synthesis of non-coding Pol II transcripts, such as enhancer RNAs (eRNAs), small nuclear RNAs (snRNAs), telomerase RNAs and long non-coding RNAs (lncRNAs). Within the integrator complex, INTS13 is part of the integrator tail module and acts as a platform for the recruitment of transcription factors at promoters. At prophase, mediates recruitment of cytoplasmic dynein to the nuclear envelope, a step important for proper centrosome-nucleus coupling. At G2/M phase, may be required for proper spindle formation and execution of cytokinesis. The protein is Integrator complex subunit 13 of Mus musculus (Mouse).